We begin with the raw amino-acid sequence, 771 residues long: Polymeric immunoglobulin receptor (771 aa).

The N-terminal stretch at 1–18 is a signal peptide; the sequence is MRLYLFTLLVTVFSGVST. Topologically, residues 19–645 are extracellular; that stretch reads KSPIFGPQEV…DGQSRSSSSK (627 aa). Positions 21–120 constitute an Ig-like V-type 1; required for binding to polymeric IgA and IgM domain; sequence PIFGPQEVSS…GLGTSNRGLS (100 aa). A disulfide bond links Cys-40 and Cys-110. N-linked (GlcNAc...) asparagine glycosylation is found at Asn-90, Asn-147, Asn-170, and Asn-206. 4 consecutive Ig-like V-type domains span residues 135–237, 245–351, 352–457, and 463–563; these read SDTH…DLQV, LYKD…ESTI, PNRR…LQVA, and PNLE…IYIA. 3 cysteine pairs are disulfide-bonded: Cys-152–Cys-220, Cys-257–Cys-324, and Cys-370–Cys-440. Residues Asn-420 and Asn-471 are each glycosylated (N-linked (GlcNAc...) asparagine). A disulfide bond links Cys-484 and Cys-546. A disordered region spans residues 622-641; sequence QAQENRASGDAGSADGQSRS. A compositionally biased stretch (low complexity) spans 627–641; that stretch reads RASGDAGSADGQSRS. The helical transmembrane segment at 646–668 threads the bilayer; that stretch reads VLFSTLVPLGLVLAVGAIAVWVA. Residues 669–771 lie on the Cytoplasmic side of the membrane; sequence RVRHRKNVDR…AQVHDGPQEA (103 aa). A phosphoserine mark is found at Ser-680, Ser-689, Ser-696, and Ser-742.

As to quaternary structure, interacts (mainly via CDR1-like domain) with dimeric IgA. Interacts (mainly via CDR2-like domain) with pentameric IgM. In terms of assembly, either free or part of the secretory IgA (sIgA) complex that consists of two, four or five IgA monomers, and two additional non-Ig polypeptides, namely the JCHAIN and the secretory component (the proteolytic product of PIGR). Free secretory component interacts with bacterial antigens toxA of C.difficile and eae of E.coli. Post-translationally, N-glycosylated. N-glycosylation is required for anchoring IgA molecules to mucus, but is not necessary for Ig binding.

The protein resides in the cell membrane. It localises to the secreted. In terms of biological role, mediates selective transcytosis of polymeric IgA and IgM across mucosal epithelial cells. Binds polymeric IgA and IgM at the basolateral surface of epithelial cells. The complex is then transported across the cell to be secreted at the apical surface. During this process, a cleavage occurs that separates the extracellular (known as the secretory component) from the transmembrane segment. Functionally, through its N-linked glycans ensures anchoring of secretory IgA (sIgA) molecules to mucus lining the epithelial surface to neutralize extracellular pathogens. On its own (free form) may act as a non-specific microbial scavenger to prevent pathogen interaction with epithelial cells. This Mus musculus (Mouse) protein is Polymeric immunoglobulin receptor (Pigr).